The primary structure comprises 66 residues: Protein KleD (66 aa).

A DNA-binding region (H-T-H motif) is located at residues 33–52 (VAVRSGNEWQQVTKWVEPAR).

The polypeptide is Protein KleD (kleD) (Escherichia coli).